Consider the following 100-residue polypeptide: Large ribosomal subunit protein uL23 (100 aa).

It belongs to the universal ribosomal protein uL23 family. Part of the 50S ribosomal subunit. Contacts protein L29, and trigger factor when it is bound to the ribosome.

In terms of biological role, one of the early assembly proteins it binds 23S rRNA. One of the proteins that surrounds the polypeptide exit tunnel on the outside of the ribosome. Forms the main docking site for trigger factor binding to the ribosome. This Vibrio vulnificus (strain CMCP6) protein is Large ribosomal subunit protein uL23.